A 53-amino-acid polypeptide reads, in one-letter code: U1-poneritoxin-Dq5a (53 aa).

Residues 1–23 form the signal peptide; it reads MNIRLMFTLIALLVLTVSFSGAN. 3 disulfides stabilise this stretch: C25–C42, C32–C47, and C41–C52.

As to expression, expressed by the venom gland.

Its subcellular location is the secreted. May have neurotoxic activity. This is U1-poneritoxin-Dq5a from Dinoponera quadriceps (South American ant).